The chain runs to 508 residues: Histone acetyltransferase type B catalytic subunit (508 aa).

Interaction with histone H4 N-terminus stretches follow at residues 44–46 (EKE) and 207–209 (YRY). Acetyl-CoA is bound by residues 249-251 (FII) and 256-262 (QQKGLGS). Glu-284 (proton donor/acceptor) is an active-site residue. Disordered regions lie at residues 364–399 (SVRPGLGAPEDEDYEEQSGRSKSKGHEKALPKPTPE) and 461–508 (QADG…SGHA). Positions 387–399 (KGHEKALPKPTPE) are enriched in basic and acidic residues.

Belongs to the HAT1 family. In terms of assembly, component of the HAT-B complex composed of at least hat-1 and hat-2. The HAT-B complex binds to histone H4 tail.

The protein resides in the cytoplasm. The protein localises to the nucleus. The enzyme catalyses L-lysyl-[protein] + acetyl-CoA = N(6)-acetyl-L-lysyl-[protein] + CoA + H(+). Catalytic component of the histone acetylase B (HAT-B) complex. Acetylates 'Lys-12' of histone H4 which is required for telomeric silencing. Has intrinsic substrate specificity that modifies lysine in recognition sequence GXGKXG. Involved in DNA double-strand break repair. The sequence is that of Histone acetyltransferase type B catalytic subunit (hat-1) from Neurospora crassa (strain ATCC 24698 / 74-OR23-1A / CBS 708.71 / DSM 1257 / FGSC 987).